Here is a 123-residue protein sequence, read N- to C-terminus: Small ribosomal subunit protein uS12 (123 aa).

The segment at 1-22 (MATINQLVRQPRKRSVEKSDVP) is disordered. Asp89 bears the 3-methylthioaspartic acid mark. The tract at residues 100–123 (GSLDTSGVKGRNQGRSKYGTKRPK) is disordered. Residues 111 to 123 (NQGRSKYGTKRPK) show a composition bias toward basic residues.

It belongs to the universal ribosomal protein uS12 family. In terms of assembly, part of the 30S ribosomal subunit. Contacts proteins S8 and S17. May interact with IF1 in the 30S initiation complex.

Its function is as follows. With S4 and S5 plays an important role in translational accuracy. Interacts with and stabilizes bases of the 16S rRNA that are involved in tRNA selection in the A site and with the mRNA backbone. Located at the interface of the 30S and 50S subunits, it traverses the body of the 30S subunit contacting proteins on the other side and probably holding the rRNA structure together. The combined cluster of proteins S8, S12 and S17 appears to hold together the shoulder and platform of the 30S subunit. This chain is Small ribosomal subunit protein uS12, found in Pseudomonas putida (strain GB-1).